The chain runs to 458 residues: Sulfite exporter TauE/SafE family protein 2 (458 aa).

A run of 12 helical transmembrane segments spans residues 5–25, 53–73, 74–94, 101–121, 128–148, 150–170, 227–247, 267–287, 324–344, 348–368, 386–406, and 418–438; these read FVPI…EQEP, IELT…SSIS, SAGG…VAGL, SFSA…NLFV, GKTL…LLGV, IGVI…FAVF, FPWI…AVYL, YWLI…WICF, VMAL…GMLI, LLQV…MVLF, GTAS…LKVV, and IIVF…TSYG.

The protein belongs to the 4-toluene sulfonate uptake permease (TSUP) (TC 2.A.102) family.

The protein resides in the membrane. This is Sulfite exporter TauE/SafE family protein 2 from Arabidopsis thaliana (Mouse-ear cress).